The following is a 268-amino-acid chain: tRNA pseudouridine synthase A (268 aa).

Residue D52 is the Nucleophile of the active site. Y110 contacts substrate.

It belongs to the tRNA pseudouridine synthase TruA family. In terms of assembly, homodimer.

The enzyme catalyses uridine(38/39/40) in tRNA = pseudouridine(38/39/40) in tRNA. Its function is as follows. Formation of pseudouridine at positions 38, 39 and 40 in the anticodon stem and loop of transfer RNAs. The sequence is that of tRNA pseudouridine synthase A from Prochlorococcus marinus (strain AS9601).